The chain runs to 488 residues: Protein Notchless (488 aa).

The segment at 1-22 (MLAKKQKMQETDTEQEATPHTI) is disordered. The interval 19–101 (PHTIQARLVS…VIDIVYQPQA (83 aa)) is ubiquitin-like (UBL) domain. 8 WD repeats span residues 117-156 (GHAE…PHFT), 159-198 (GHKQ…QKGR), 202-246 (GHKK…CLMN), 249-287 (GHTN…LCRT), 329-370 (LQES…CVER), 373-412 (GHQN…YMAT), 415-454 (GHVQ…LAQE), and 457-488 (GHAD…LWAY).

It belongs to the NLE1/RSA4 family. In terms of assembly, interacts with Notch (via cytoplasmic domain). Associates with the pre-60S ribosomal particle.

It is found in the nucleus. Its subcellular location is the nucleolus. In terms of biological role, plays a role in regulating Notch activity. This chain is Protein Notchless, found in Drosophila melanogaster (Fruit fly).